A 225-amino-acid polypeptide reads, in one-letter code: NAD(P)H-quinone oxidoreductase subunit K, chloroplastic (225 aa).

The [4Fe-4S] cluster site is built by C43, C44, C108, and C139.

This sequence belongs to the complex I 20 kDa subunit family. In terms of assembly, NDH is composed of at least 16 different subunits, 5 of which are encoded in the nucleus. It depends on [4Fe-4S] cluster as a cofactor.

Its subcellular location is the plastid. The protein resides in the chloroplast thylakoid membrane. The enzyme catalyses a plastoquinone + NADH + (n+1) H(+)(in) = a plastoquinol + NAD(+) + n H(+)(out). It carries out the reaction a plastoquinone + NADPH + (n+1) H(+)(in) = a plastoquinol + NADP(+) + n H(+)(out). Functionally, NDH shuttles electrons from NAD(P)H:plastoquinone, via FMN and iron-sulfur (Fe-S) centers, to quinones in the photosynthetic chain and possibly in a chloroplast respiratory chain. The immediate electron acceptor for the enzyme in this species is believed to be plastoquinone. Couples the redox reaction to proton translocation, and thus conserves the redox energy in a proton gradient. The polypeptide is NAD(P)H-quinone oxidoreductase subunit K, chloroplastic (Lolium perenne (Perennial ryegrass)).